The following is a 50-amino-acid chain: MKQHKAMIVALIVICITAVVAALVTRKDLCEVHIRTGQTEVAVFTAYESE.

Over 1–5 (MKQHK) the chain is Cytoplasmic. Residues 6–24 (AMIVALIVICITAVVAALV) traverse the membrane as a helical; Signal-anchor for type II membrane protein segment. Residues 25–50 (TRKDLCEVHIRTGQTEVAVFTAYESE) lie on the Periplasmic side of the membrane.

The protein belongs to the Hok/Gef family. In terms of assembly, homodimer; disulfide-linked.

It localises to the cell inner membrane. Functionally, toxic component of a type I toxin-antitoxin (TA) system. When overexpressed kills cells within minutes; causes collapse of the transmembrane potential and arrest of respiration. Its toxic effect is probably neutralized by antisense antitoxin RNA SokC. The chain is Toxic protein HokC from Escherichia coli (strain K12).